The following is a 109-amino-acid chain: B melanoma antigen 3 (109 aa).

Positions 1–17 (MAAGVVFLALSAQLLQA) are cleaved as a signal peptide.

It belongs to the BAGE family. Not expressed in normal tissues except in testis. Expressed in melanoma, bladder and lung carcinomas.

The protein localises to the secreted. Unknown. Candidate gene encoding tumor antigens. The sequence is that of B melanoma antigen 3 (BAGE3) from Homo sapiens (Human).